The following is a 310-amino-acid chain: Small ribosomal subunit protein uS2 (310 aa).

The span at Trp-249 to Ala-272 shows a compositional bias: basic and acidic residues. A disordered region spans residues Trp-249–Ala-310. The span at Glu-273–Ala-310 shows a compositional bias: low complexity.

It belongs to the universal ribosomal protein uS2 family.

This Streptomyces coelicolor (strain ATCC BAA-471 / A3(2) / M145) protein is Small ribosomal subunit protein uS2 (rpsB).